The chain runs to 78 residues: Beta-defensin 105A (78 aa).

An N-terminal signal peptide occupies residues 1–27 (MALIRKTFYFLFAVFFVLVQLPSECQA). 3 cysteine pairs are disulfide-bonded: C43–C74, C53–C67, and C57–C73.

Belongs to the beta-defensin family.

It localises to the secreted. Its function is as follows. Has antimicrobial activity. The polypeptide is Beta-defensin 105A (DEFB105A) (Pongo pygmaeus (Bornean orangutan)).